Here is a 271-residue protein sequence, read N- to C-terminus: GTP cyclohydrolase FolE2 (271 aa).

This sequence belongs to the GTP cyclohydrolase IV family.

The catalysed reaction is GTP + H2O = 7,8-dihydroneopterin 3'-triphosphate + formate + H(+). Its pathway is cofactor biosynthesis; 7,8-dihydroneopterin triphosphate biosynthesis; 7,8-dihydroneopterin triphosphate from GTP: step 1/1. Functionally, converts GTP to 7,8-dihydroneopterin triphosphate. The chain is GTP cyclohydrolase FolE2 from Geotalea uraniireducens (strain Rf4) (Geobacter uraniireducens).